Consider the following 121-residue polypeptide: Movement protein TGBp3 (121 aa).

Residues 1–40 (MHYPTEADTSTGPNPSATSAPVRPRHVTPSLSPSSSSSPS) form a disordered region. At 1–43 (MHYPTEADTSTGPNPSATSAPVRPRHVTPSLSPSSSSSPSPDS) the chain is on the lumenal side. A compositionally biased stretch (polar residues) spans 7-19 (ADTSTGPNPSATS). Low complexity predominate over residues 29-40 (PSLSPSSSSSPS). The helical transmembrane segment at 44–64 (FYYFLAAAVILTAALAAALLT) threads the bilayer. At 65–121 (PNPGCTIVITGHTTIIQGSCPIPPQLVLAAHPRGLSLEQYLKFTNTLPDGSQHRSHR) the chain is on the cytoplasmic side.

Belongs to the Tymovirales TGBp3 protein family.

The protein localises to the host endoplasmic reticulum membrane. Plays a role in viral cell-to-cell propagation, by facilitating genome transport to neighboring plant cells through plasmosdesmata. May induce the formation of granular vesicles derived from the Endoplasmic reticulum, which align on actin filaments. The polypeptide is Movement protein TGBp3 (Plantago asiatica (P1AMV)).